The sequence spans 143 residues: Large ribosomal subunit protein uL13 (143 aa).

It belongs to the universal ribosomal protein uL13 family. In terms of assembly, part of the 50S ribosomal subunit.

In terms of biological role, this protein is one of the early assembly proteins of the 50S ribosomal subunit, although it is not seen to bind rRNA by itself. It is important during the early stages of 50S assembly. In Thermoanaerobacter pseudethanolicus (strain ATCC 33223 / 39E) (Clostridium thermohydrosulfuricum), this protein is Large ribosomal subunit protein uL13.